The chain runs to 214 residues: ATP-dependent dethiobiotin synthetase BioD (214 aa).

10–15 (GIGKTY) is an ATP binding site. T14 serves as a coordination point for Mg(2+). The active site involves K35. T39 is a binding site for substrate. ATP contacts are provided by residues D44, 109 to 112 (EGAG), and 169 to 170 (NC). The Mg(2+) site is built by D44 and E109.

The protein belongs to the dethiobiotin synthetase family. As to quaternary structure, homodimer. Requires Mg(2+) as cofactor.

The protein localises to the cytoplasm. It catalyses the reaction (7R,8S)-7,8-diammoniononanoate + CO2 + ATP = (4R,5S)-dethiobiotin + ADP + phosphate + 3 H(+). Its pathway is cofactor biosynthesis; biotin biosynthesis; biotin from 7,8-diaminononanoate: step 1/2. Its function is as follows. Catalyzes a mechanistically unusual reaction, the ATP-dependent insertion of CO2 between the N7 and N8 nitrogen atoms of 7,8-diaminopelargonic acid (DAPA, also called 7,8-diammoniononanoate) to form a ureido ring. The polypeptide is ATP-dependent dethiobiotin synthetase BioD (Methanocaldococcus jannaschii (strain ATCC 43067 / DSM 2661 / JAL-1 / JCM 10045 / NBRC 100440) (Methanococcus jannaschii)).